Reading from the N-terminus, the 457-residue chain is Multidrug resistance protein MdtK (457 aa).

12 consecutive transmembrane segments (helical) span residues 11 to 31, 53 to 73, 93 to 113, 127 to 147, 160 to 180, 188 to 208, 243 to 263, 276 to 296, 314 to 334, 350 to 370, 387 to 407, and 418 to 438; these read LLAL…MGFV, IWLP…PVIA, WLAG…GYII, AVGY…FQVA, GMVM…IFIY, LGGI…FIAM, LPIA…ALLV, IALN…AAVT, AART…IFTV, VVAL…SDSI, IFFI…YILA, and PAGF…LMML.

It belongs to the multi antimicrobial extrusion (MATE) (TC 2.A.66.1) family. MdtK subfamily.

Its subcellular location is the cell inner membrane. Its function is as follows. Multidrug efflux pump that functions probably as a Na(+)/drug antiporter. The polypeptide is Multidrug resistance protein MdtK (Salmonella enteritidis PT4 (strain P125109)).